The chain runs to 154 residues: Myoglobin (154 aa).

Residues G2–K148 form the Globin domain. H65 is a binding site for nitrite. An O2-binding site is contributed by H65. H94 lines the heme b pocket.

The protein belongs to the globin family. Monomeric.

Its subcellular location is the cytoplasm. The protein localises to the sarcoplasm. The enzyme catalyses Fe(III)-heme b-[protein] + nitric oxide + H2O = Fe(II)-heme b-[protein] + nitrite + 2 H(+). It carries out the reaction H2O2 + AH2 = A + 2 H2O. Its function is as follows. Monomeric heme protein which primary function is to store oxygen and facilitate its diffusion within muscle tissues. Reversibly binds oxygen through a pentacoordinated heme iron and enables its timely and efficient release as needed during periods of heightened demand. Depending on the oxidative conditions of tissues and cells, and in addition to its ability to bind oxygen, it also has a nitrite reductase activity whereby it regulates the production of bioactive nitric oxide. Under stress conditions, like hypoxia and anoxia, it also protects cells against reactive oxygen species thanks to its pseudoperoxidase activity. The protein is Myoglobin (MB) of Chelonia mydas (Green sea-turtle).